A 276-amino-acid chain; its full sequence is RRP15-like protein (276 aa).

Disordered regions lie at residues 1-132 (MALL…QLRV) and 201-276 (KRAK…DGEE). Composition is skewed to basic and acidic residues over residues 75-95 (FQKD…KADV) and 226-245 (KGSS…DFMT). The segment covering 254 to 276 (EEDDDEEGHNDEADDSDYDDGEE) has biased composition (acidic residues). At S269 the chain carries Phosphoserine. The residue at position 271 (Y271) is a Phosphotyrosine.

This sequence belongs to the RRP15 family.

The polypeptide is RRP15-like protein (Drosophila melanogaster (Fruit fly)).